We begin with the raw amino-acid sequence, 289 residues long: Acetyl-coenzyme A carboxylase carboxyl transferase subunit beta (289 aa).

The CoA carboxyltransferase N-terminal domain maps to 28 to 289 (VMTKCPKCKK…QGEGMAVWQN (262 aa)). Residues cysteine 32, cysteine 35, cysteine 51, and cysteine 54 each coordinate Zn(2+). Residues 32–54 (CPKCKKIMYTKELLKNLKVCVNC) form a C4-type zinc finger.

This sequence belongs to the AccD/PCCB family. Acetyl-CoA carboxylase is a heterohexamer composed of biotin carboxyl carrier protein (AccB), biotin carboxylase (AccC) and two subunits each of ACCase subunit alpha (AccA) and ACCase subunit beta (AccD). Zn(2+) serves as cofactor.

The protein resides in the cytoplasm. It catalyses the reaction N(6)-carboxybiotinyl-L-lysyl-[protein] + acetyl-CoA = N(6)-biotinyl-L-lysyl-[protein] + malonyl-CoA. The protein operates within lipid metabolism; malonyl-CoA biosynthesis; malonyl-CoA from acetyl-CoA: step 1/1. In terms of biological role, component of the acetyl coenzyme A carboxylase (ACC) complex. Biotin carboxylase (BC) catalyzes the carboxylation of biotin on its carrier protein (BCCP) and then the CO(2) group is transferred by the transcarboxylase to acetyl-CoA to form malonyl-CoA. The sequence is that of Acetyl-coenzyme A carboxylase carboxyl transferase subunit beta from Bacillus cytotoxicus (strain DSM 22905 / CIP 110041 / 391-98 / NVH 391-98).